The chain runs to 513 residues: Cobyric acid synthase (513 aa).

The 206-residue stretch at 252–457 folds into the GATase cobBQ-type domain; sequence KIDIAVIRLP…LHGIFDEEGI (206 aa). Cys-333 functions as the Nucleophile in the catalytic mechanism. The active site involves His-449.

The protein belongs to the CobB/CobQ family. CobQ subfamily.

It participates in cofactor biosynthesis; adenosylcobalamin biosynthesis. In terms of biological role, catalyzes amidations at positions B, D, E, and G on adenosylcobyrinic A,C-diamide. NH(2) groups are provided by glutamine, and one molecule of ATP is hydrogenolyzed for each amidation. This Lachnoclostridium phytofermentans (strain ATCC 700394 / DSM 18823 / ISDg) (Clostridium phytofermentans) protein is Cobyric acid synthase.